We begin with the raw amino-acid sequence, 47 residues long: PhoP/PhoQ regulator MgrB (47 aa).

Residues 6 to 26 (WVALVVVVLACLLLWAQVFNM) form a helical membrane-spanning segment.

This sequence belongs to the MgrB family. As to quaternary structure, may form homooligomers. Probably interacts with the periplasmic domain of PhoQ.

The protein localises to the cell inner membrane. Functionally, phoP-regulated transcription is redox-sensitive, being activated when the periplasm becomes more reducing. MgrB acts between DsbA/DsbB and PhoP/PhoQ in this pathway. Represses PhoP/PhoQ signaling, possibly by binding to the periplasmic domain of PhoQ, altering its activity and that of downstream effector PhoP. This Escherichia coli O127:H6 (strain E2348/69 / EPEC) protein is PhoP/PhoQ regulator MgrB.